The following is a 219-amino-acid chain: Elongation factor Ts (219 aa).

Positions 81-84 (SDFV) are involved in Mg(2+) ion dislocation from EF-Tu.

It belongs to the EF-Ts family.

The protein localises to the cytoplasm. Its function is as follows. Associates with the EF-Tu.GDP complex and induces the exchange of GDP to GTP. It remains bound to the aminoacyl-tRNA.EF-Tu.GTP complex up to the GTP hydrolysis stage on the ribosome. This is Elongation factor Ts from Koribacter versatilis (strain Ellin345).